The sequence spans 1090 residues: MPRNPRFCFFLFLLFHSSLFFSIPCFSIDEQGLALLSWKSQLNISGDALSSWKASESNPCQWVGIKCNERGQVSEIQLQVMDFQGPLPATNLRQIKSLTLLSLTSVNLTGSIPKELGDLSELEVLDLADNSLSGEIPVDIFKLKKLKILSLNTNNLEGVIPSELGNLVNLIELTLFDNKLAGEIPRTIGELKNLEIFRAGGNKNLRGELPWEIGNCESLVTLGLAETSLSGRLPASIGNLKKVQTIALYTSLLSGPIPDEIGNCTELQNLYLYQNSISGSIPVSMGRLKKLQSLLLWQNNLVGKIPTELGTCPELFLVDLSENLLTGNIPRSFGNLPNLQELQLSVNQLSGTIPEELANCTKLTHLEIDNNQISGEIPPLIGKLTSLTMFFAWQNQLTGIIPESLSQCQELQAIDLSYNNLSGSIPNGIFEIRNLTKLLLLSNYLSGFIPPDIGNCTNLYRLRLNGNRLAGNIPAEIGNLKNLNFIDISENRLIGNIPPEISGCTSLEFVDLHSNGLTGGLPGTLPKSLQFIDLSDNSLTGSLPTGIGSLTELTKLNLAKNRFSGEIPREISSCRSLQLLNLGDNGFTGEIPNELGRIPSLAISLNLSCNHFTGEIPSRFSSLTNLGTLDVSHNKLAGNLNVLADLQNLVSLNISFNEFSGELPNTLFFRKLPLSVLESNKGLFISTRPENGIQTRHRSAVKVTMSILVAASVVLVLMAVYTLVKAQRITGKQEELDSWEVTLYQKLDFSIDDIVKNLTSANVIGTGSSGVVYRVTIPSGETLAVKKMWSKEENRAFNSEINTLGSIRHRNIIRLLGWCSNRNLKLLFYDYLPNGSLSSLLHGAGKGSGGADWEARYDVVLGVAHALAYLHHDCLPPILHGDVKAMNVLLGSRFESYLADFGLAKIVSGEGVTDGDSSKLSNRPPLAGSYGYMAPEHASMQHITEKSDVYSYGVVLLEVLTGKHPLDPDLPGGAHLVQWVRDHLAGKKDPREILDPRLRGRADPIMHEMLQTLAVSFLCVSNKASDRPMMKDIVAMLKEIRQFDMDRSESDMIKGGKCEKWQPQPLPPEKIVSTPRGSSNCSFAYSDESV.

An N-terminal signal peptide occupies residues 1–20; the sequence is MPRNPRFCFFLFLLFHSSLF. Residues 21-702 are Extracellular-facing; it reads FSIPCFSIDE…IQTRHRSAVK (682 aa). An LRR 1 repeat occupies 36-59; sequence LSWKSQLNISGDALSSWKASESNP. Asparagine 43 carries an N-linked (GlcNAc...) asparagine glycan. Cysteine 60 and cysteine 67 form a disulfide bridge. LRR repeat units lie at residues 95–119, 120–143, 145–166, and 168–191; these read IKSL…LGDL, SELE…IFKL, KLKI…ELGN, and VNLI…IGEL. A glycan (N-linked (GlcNAc...) asparagine) is linked at asparagine 107. Short sequence motifs (small peptide recognition) lie at residues 176-177, 198-201, 221-226, and tyrosine 249; these read FD, RAGG, and TLGLAE. 7 LRR repeats span residues 216–240, 242–264, 265–288, 289–312, 314–335, 336–360, and 362–386; these read CESL…IGNL, KVQT…IGNC, TELQ…MGRL, KKLQ…LGTC, ELFL…SFGN, LPNL…LANC, and KLTH…KLTS. Asparagine 263 carries N-linked (GlcNAc...) asparagine glycosylation. A CLE45 peptide binding motif is present at residues 269-273; it reads NLYLY. Residues 271 to 273 carry the Small peptide recognition motif; sequence YLY. Short sequence motifs (small peptide recognition) lie at residues 319–322 and 341–343; these read DLSE and ELQ. An N-linked (GlcNAc...) asparagine glycan is attached at asparagine 359. 2 short sequence motifs (small peptide recognition) span residues 389 to 393 and 415 to 418; these read MFFAW and DLSY. 11 LRR repeats span residues 408–432, 434–456, 457–480, 481–504, 506–526, 527–550, 551–574, 576–598, 600–622, 623–646, and 647–670; these read CQEL…IFEI, NLTK…IGNC, TNLY…IGNL, KNLN…ISGC, SLEF…GTLP, KSLQ…IGSL, TELT…ISSC, SLQL…LGRI, SLAI…RFSS, LTNL…LADL, and QNLV…LFFR. N-linked (GlcNAc...) asparagine glycosylation is found at asparagine 420 and asparagine 434. The Small peptide recognition signature appears at 437 to 441; it reads KLLLL. Asparagine 455 carries an N-linked (GlcNAc...) asparagine glycan. Positions 461-463 match the Small peptide recognition motif; it reads RLR. The N-linked (GlcNAc...) asparagine glycan is linked to asparagine 606. Asparagine 653 carries N-linked (GlcNAc...) asparagine glycosylation. A helical membrane pass occupies residues 703–723; the sequence is VTMSILVAASVVLVLMAVYTL. Over 724–1090 the chain is Cytoplasmic; it reads VKAQRITGKQ…CSFAYSDESV (367 aa). In terms of domain architecture, Protein kinase spans 758 to 1040; the sequence is LTSANVIGTG…KDIVAMLKEI (283 aa). ATP-binding positions include 764-772 and lysine 786; that span reads IGTGSSGVV. A phosphotyrosine mark is found at tyrosine 829 and tyrosine 869. Catalysis depends on aspartate 882, which acts as the Proton acceptor. Phosphotyrosine is present on tyrosine 932. The LRR 24 repeat unit spans residues 1037–1060; it reads LKEIRQFDMDRSESDMIKGGKCEK. A disordered region spans residues 1054–1079; that stretch reads KGGKCEKWQPQPLPPEKIVSTPRGSS.

Belongs to the protein kinase superfamily. Ser/Thr protein kinase family. As to quaternary structure, self-interacts. Interacts with RGF1; this interaction triggers its phosphorylation and ubiquitination and the formation of heterodimers with SERK1. Autophosphorylated. Post-translationally, phosphorylated and ubiquitinated upon interaction with RGF1, thus leading to activation a subsequent degradation. In terms of tissue distribution, expressed in floers, pollen grains and stipules. Present in roots.

The protein localises to the cell membrane. It carries out the reaction L-seryl-[protein] + ATP = O-phospho-L-seryl-[protein] + ADP + H(+). The catalysed reaction is L-threonyl-[protein] + ATP = O-phospho-L-threonyl-[protein] + ADP + H(+). Receptor with a serine/threonine-protein kinase activity. Together with SKM1, LRR-rich receptor-like kinase (LRR-RLK) required for male fertility by the perception of CLE43 and CLE45 peptides and the transduction of their promoting action in pollen tubes, especially under relatively high temperature (at 30 degrees Celsius), thus conferring tolerance against high temperature probably through the maintenance of mitochondrial activity. Seems to not be involved in the perception of CLE45 peptide in roots. Together with RGI1, RGI2, RGI3, RGI4 and RGI5, acts as receptor of RGF1, a peptide hormone that maintains the postembryonic root stem cell niche by regulating the expression levels and patterns of the transcription factor PLETHORA (PLT). Links RGF1 signal with its downstream components. The protein is Leucine-rich repeat receptor-like serine/threonine-protein kinase RGI4 of Arabidopsis thaliana (Mouse-ear cress).